Here is a 285-residue protein sequence, read N- to C-terminus: Steroidogenic acute regulatory protein, mitochondrial (285 aa).

A mitochondrion-targeting transit peptide spans 1–63 (MLLATFKLCA…RRSSLLGSRL (63 aa)). 2 positions are modified to phosphoserine; by PKA: serine 57 and serine 195. In terms of domain architecture, START spans 67-280 (LYSDQELAYL…LRKRLESHPA (214 aa)).

In terms of assembly, may interact with TSPO. As to expression, expressed in gonads, adrenal cortex and kidney.

The protein resides in the mitochondrion. The catalysed reaction is cholesterol(in) = cholesterol(out). It participates in steroid metabolism; cholesterol metabolism. In terms of biological role, plays a key role in steroid hormone synthesis by enhancing the metabolism of cholesterol into pregnenolone. Mediates the transfer of cholesterol from the outer mitochondrial membrane to the inner mitochondrial membrane where it is cleaved to pregnenolone. The polypeptide is Steroidogenic acute regulatory protein, mitochondrial (STAR) (Homo sapiens (Human)).